The following is a 314-amino-acid chain: 4-hydroxy-3-methylbut-2-enyl diphosphate reductase (314 aa).

Cys12 provides a ligand contact to [4Fe-4S] cluster. (2E)-4-hydroxy-3-methylbut-2-enyl diphosphate is bound by residues His41 and His74. Dimethylallyl diphosphate contacts are provided by His41 and His74. Isopentenyl diphosphate contacts are provided by His41 and His74. Cys96 provides a ligand contact to [4Fe-4S] cluster. His124 contacts (2E)-4-hydroxy-3-methylbut-2-enyl diphosphate. His124 contributes to the dimethylallyl diphosphate binding site. His124 lines the isopentenyl diphosphate pocket. The active-site Proton donor is the Glu126. A (2E)-4-hydroxy-3-methylbut-2-enyl diphosphate-binding site is contributed by Thr167. A [4Fe-4S] cluster-binding site is contributed by Cys197. 4 residues coordinate (2E)-4-hydroxy-3-methylbut-2-enyl diphosphate: Ser225, Ser226, Asn227, and Ser269. Residues Ser225, Ser226, Asn227, and Ser269 each contribute to the dimethylallyl diphosphate site. Isopentenyl diphosphate contacts are provided by Ser225, Ser226, Asn227, and Ser269.

It belongs to the IspH family. [4Fe-4S] cluster serves as cofactor.

The catalysed reaction is isopentenyl diphosphate + 2 oxidized [2Fe-2S]-[ferredoxin] + H2O = (2E)-4-hydroxy-3-methylbut-2-enyl diphosphate + 2 reduced [2Fe-2S]-[ferredoxin] + 2 H(+). The enzyme catalyses dimethylallyl diphosphate + 2 oxidized [2Fe-2S]-[ferredoxin] + H2O = (2E)-4-hydroxy-3-methylbut-2-enyl diphosphate + 2 reduced [2Fe-2S]-[ferredoxin] + 2 H(+). Its pathway is isoprenoid biosynthesis; dimethylallyl diphosphate biosynthesis; dimethylallyl diphosphate from (2E)-4-hydroxy-3-methylbutenyl diphosphate: step 1/1. The protein operates within isoprenoid biosynthesis; isopentenyl diphosphate biosynthesis via DXP pathway; isopentenyl diphosphate from 1-deoxy-D-xylulose 5-phosphate: step 6/6. Its function is as follows. Catalyzes the conversion of 1-hydroxy-2-methyl-2-(E)-butenyl 4-diphosphate (HMBPP) into a mixture of isopentenyl diphosphate (IPP) and dimethylallyl diphosphate (DMAPP). Acts in the terminal step of the DOXP/MEP pathway for isoprenoid precursor biosynthesis. This is 4-hydroxy-3-methylbut-2-enyl diphosphate reductase from Psychromonas ingrahamii (strain DSM 17664 / CCUG 51855 / 37).